Reading from the N-terminus, the 598-residue chain is Aspartate--tRNA ligase (598 aa).

Residue Glu-175 coordinates L-aspartate. Residues 199-202 (QLFK) are aspartate. L-aspartate is bound at residue Arg-221. ATP contacts are provided by residues 221–223 (RDE) and Gln-230. His-450 contributes to the L-aspartate binding site. Residue Glu-486 coordinates ATP. Arg-493 is an L-aspartate binding site. 538 to 541 (GLDR) serves as a coordination point for ATP.

It belongs to the class-II aminoacyl-tRNA synthetase family. Type 1 subfamily. As to quaternary structure, homodimer.

Its subcellular location is the cytoplasm. It carries out the reaction tRNA(Asp) + L-aspartate + ATP = L-aspartyl-tRNA(Asp) + AMP + diphosphate. Functionally, catalyzes the attachment of L-aspartate to tRNA(Asp) in a two-step reaction: L-aspartate is first activated by ATP to form Asp-AMP and then transferred to the acceptor end of tRNA(Asp). The chain is Aspartate--tRNA ligase from Lactiplantibacillus plantarum (strain ATCC BAA-793 / NCIMB 8826 / WCFS1) (Lactobacillus plantarum).